We begin with the raw amino-acid sequence, 125 residues long: Small ribosomal subunit protein uS11 (125 aa).

The protein belongs to the universal ribosomal protein uS11 family. In terms of assembly, part of the 30S ribosomal subunit. Interacts with proteins S7 and S18. Binds to IF-3.

Functionally, located on the platform of the 30S subunit, it bridges several disparate RNA helices of the 16S rRNA. Forms part of the Shine-Dalgarno cleft in the 70S ribosome. This chain is Small ribosomal subunit protein uS11, found in Coprothermobacter proteolyticus (strain ATCC 35245 / DSM 5265 / OCM 4 / BT).